A 295-amino-acid chain; its full sequence is Acetylglutamate kinase (295 aa).

Substrate is bound by residues Gly61–Gly62, Arg83, and Asn182.

The protein belongs to the acetylglutamate kinase family. ArgB subfamily.

It localises to the cytoplasm. The enzyme catalyses N-acetyl-L-glutamate + ATP = N-acetyl-L-glutamyl 5-phosphate + ADP. Its pathway is amino-acid biosynthesis; L-arginine biosynthesis; N(2)-acetyl-L-ornithine from L-glutamate: step 2/4. Functionally, catalyzes the ATP-dependent phosphorylation of N-acetyl-L-glutamate. The protein is Acetylglutamate kinase of Clostridium acetobutylicum (strain ATCC 824 / DSM 792 / JCM 1419 / IAM 19013 / LMG 5710 / NBRC 13948 / NRRL B-527 / VKM B-1787 / 2291 / W).